The sequence spans 88 residues: MKFFIATIFATGALAISVCPTGLYSNPQCCGANILGVAALDCHTPRAPILPGALFEAVCSDEGGKEPLCCTIPVAGQDLLCVAPVGTA.

The first 15 residues, 1–15 (MKFFIATIFATGALA), serve as a signal peptide directing secretion. Intrachain disulfides connect Cys19-Cys69, Cys29-Cys59, Cys30-Cys42, and Cys70-Cys81.

It belongs to the cerato-ulmin hydrophobin family. In terms of assembly, homodimer. Homodimers further self-assemble to form highly ordered films at water-air interfaces through intermolecular interactions.

It is found in the secreted. It localises to the cell wall. Its function is as follows. Aerial growth, conidiation, and dispersal of filamentous fungi in the environment rely upon a capability of their secreting small amphipathic proteins called hydrophobins (HPBs) with low sequence identity. Class I can self-assemble into an outermost layer of rodlet bundles on aerial cell surfaces, conferring cellular hydrophobicity that supports fungal growth, development and dispersal; whereas Class II form highly ordered films at water-air interfaces through intermolecular interactions but contribute nothing to the rodlet structure. This Trichoderma asperellum (strain ATCC 204424 / CBS 433.97 / NBRC 101777) protein is Class II hydrophobin 1.